A 331-amino-acid chain; its full sequence is Pectate lyase B (331 aa).

Residues 1–25 (MKFTGSPLLWPSWLPLPAPPPPLPS) form the signal peptide. N-linked (GlcNAc...) asparagine glycosylation is present at Asn99. Positions 139, 169, and 173 each coordinate Ca(2+). The active site involves Arg226.

The protein belongs to the polysaccharide lyase 1 family. Ca(2+) is required as a cofactor.

It is found in the secreted. It carries out the reaction Eliminative cleavage of (1-&gt;4)-alpha-D-galacturonan to give oligosaccharides with 4-deoxy-alpha-D-galact-4-enuronosyl groups at their non-reducing ends.. Its pathway is glycan metabolism; pectin degradation; 2-dehydro-3-deoxy-D-gluconate from pectin: step 2/5. Its function is as follows. Acts as a virulence factor active in plant tissue maceration. The chain is Pectate lyase B (PLB) from Colletotrichum gloeosporioides (Anthracnose fungus).